The chain runs to 478 residues: Cytochrome c-552 (478 aa).

The first 26 residues, 1–26 (MTRIKINARRIFSLLIPFFFFTSVHA), serve as a signal peptide directing secretion. His94 is a binding site for heme c. Positions 122, 125, and 126 each coordinate heme. The heme c site is built by Cys160, Cys163, His164, Cys209, Cys212, and His213. Residues Glu215, Tyr216, Lys261, and Gln263 each coordinate Ca(2+). Position 216 (Tyr216) interacts with substrate. His264 contacts substrate. Heme c is bound by residues His275, Cys282, Cys285, His286, His301, Cys314, Cys317, His318, and His393.

It belongs to the cytochrome c-552 family. The cofactor is Ca(2+). Heme c is required as a cofactor.

It localises to the periplasm. It carries out the reaction 6 Fe(III)-[cytochrome c] + NH4(+) + 2 H2O = 6 Fe(II)-[cytochrome c] + nitrite + 8 H(+). It participates in nitrogen metabolism; nitrate reduction (assimilation). In terms of biological role, catalyzes the reduction of nitrite to ammonia, consuming six electrons in the process. The sequence is that of Cytochrome c-552 from Shigella flexneri.